Consider the following 417-residue polypeptide: Gamma-glutamyl phosphate reductase (417 aa).

The protein belongs to the gamma-glutamyl phosphate reductase family.

It is found in the cytoplasm. The enzyme catalyses L-glutamate 5-semialdehyde + phosphate + NADP(+) = L-glutamyl 5-phosphate + NADPH + H(+). The protein operates within amino-acid biosynthesis; L-proline biosynthesis; L-glutamate 5-semialdehyde from L-glutamate: step 2/2. Functionally, catalyzes the NADPH-dependent reduction of L-glutamate 5-phosphate into L-glutamate 5-semialdehyde and phosphate. The product spontaneously undergoes cyclization to form 1-pyrroline-5-carboxylate. This is Gamma-glutamyl phosphate reductase from Clostridium novyi (strain NT).